The primary structure comprises 187 residues: Elongation factor P (187 aa).

Belongs to the elongation factor P family.

The protein resides in the cytoplasm. It functions in the pathway protein biosynthesis; polypeptide chain elongation. Involved in peptide bond synthesis. Stimulates efficient translation and peptide-bond synthesis on native or reconstituted 70S ribosomes in vitro. Probably functions indirectly by altering the affinity of the ribosome for aminoacyl-tRNA, thus increasing their reactivity as acceptors for peptidyl transferase. In Corynebacterium urealyticum (strain ATCC 43042 / DSM 7109), this protein is Elongation factor P.